The primary structure comprises 362 residues: Caspase activity and apoptosis inhibitor 1 (362 aa).

Over residues 1–14 (MTGKKSSREKRRKR) the composition is skewed to basic residues. 2 disordered regions span residues 1–44 (MTGK…SGCG) and 65–101 (TGGG…GSLQ). Low complexity predominate over residues 19–32 (AAAALAAPDLVPAV). Composition is skewed to gly residues over residues 33–44 (GGSGSGSTSGCG) and 65–74 (TGGGSGGSCW). S89 carries the post-translational modification Phosphoserine. A Phosphothreonine modification is found at T90. A Glycyl lysine isopeptide (Lys-Gly) (interchain with G-Cter in SUMO2) cross-link involves residue K105. Residues S121 and S204 each carry the phosphoserine modification. 3 disordered regions span residues 226–251 (SCVD…GKGE), 269–291 (GPCN…EAGQ), and 309–332 (LAES…DVQP). Residues 235-251 (RENKQPEGLELKQGKGE) show a composition bias toward basic and acidic residues. Residues 273–282 (EEAAAPEVPE) are compositionally biased toward low complexity. Residues 282 to 312 (ENTVQSEAGQIDDLEKDIEKSVNEILGLAES) are a coiled coil. Residue S313 is modified to Phosphoserine.

Functionally, anti-apoptotic protein that modulates a caspase-10 dependent mitochondrial caspase-3/9 feedback amplification loop. The protein is Caspase activity and apoptosis inhibitor 1 (CAAP1) of Bos taurus (Bovine).